Consider the following 715-residue polypeptide: Fatty acid oxidation complex subunit alpha (715 aa).

The segment at 1–190 (MIYEGKAITV…KVGAVDAVVA (190 aa)) is enoyl-CoA hydratase/isomerase. Asp-297 contacts substrate. Positions 312–715 (HDVKQAAVLG…MAKNGQRFFN (404 aa)) are 3-hydroxyacyl-CoA dehydrogenase. NAD(+) is bound by residues Met-325, Asp-344, 401–403 (VVE), Lys-408, and Ser-430. His-451 serves as the catalytic For 3-hydroxyacyl-CoA dehydrogenase activity. Asn-454 provides a ligand contact to NAD(+). Residues Asn-501 and Tyr-660 each contribute to the substrate site.

In the N-terminal section; belongs to the enoyl-CoA hydratase/isomerase family. It in the C-terminal section; belongs to the 3-hydroxyacyl-CoA dehydrogenase family. Heterotetramer of two alpha chains (FadB) and two beta chains (FadA).

The enzyme catalyses a (3S)-3-hydroxyacyl-CoA + NAD(+) = a 3-oxoacyl-CoA + NADH + H(+). It carries out the reaction a (3S)-3-hydroxyacyl-CoA = a (2E)-enoyl-CoA + H2O. It catalyses the reaction a 4-saturated-(3S)-3-hydroxyacyl-CoA = a (3E)-enoyl-CoA + H2O. The catalysed reaction is (3S)-3-hydroxybutanoyl-CoA = (3R)-3-hydroxybutanoyl-CoA. The enzyme catalyses a (3Z)-enoyl-CoA = a 4-saturated (2E)-enoyl-CoA. It carries out the reaction a (3E)-enoyl-CoA = a 4-saturated (2E)-enoyl-CoA. Its pathway is lipid metabolism; fatty acid beta-oxidation. Involved in the aerobic and anaerobic degradation of long-chain fatty acids via beta-oxidation cycle. Catalyzes the formation of 3-oxoacyl-CoA from enoyl-CoA via L-3-hydroxyacyl-CoA. It can also use D-3-hydroxyacyl-CoA and cis-3-enoyl-CoA as substrate. The chain is Fatty acid oxidation complex subunit alpha from Pseudomonas putida (Arthrobacter siderocapsulatus).